Reading from the N-terminus, the 253-residue chain is uncharacterized protein (253 aa).

Ala2 is modified (N-acetylalanine).

It belongs to the NAD(P)-dependent epimerase/dehydratase family. Homodimer.

This is an uncharacterized protein from Arabidopsis thaliana (Mouse-ear cress).